The primary structure comprises 651 residues: MQTRYDVIVVGAGHAGCEAAHAAARLGCRTLLLTIDLDKLAHMSCNPSIGGPAKGHLVREIDALGGLMGRITDRSAIQIRLLNESKGPAVQSLRAQCDKRLYARLMKETLERVPNLDLRQAMVERIAPPNADTQCFTVTTHTGWRYLAPAVILTTGTFLRGRAITGEAMWGAGRAGEAPAMALSEDLAALGFPLVRLKTGTPPRLAAATIDFSLTELQPGSDTPLSFGHYYPELGETIPPPEYHGPPAPVYPHPQLDGWRPQLPCYQVHTTPEFHAIIRENLHRAPLFSGIIEGVGPRYCPSIEDKIVRFADKERHGLFLEPEGWTTSEVYVQGCNTSLPEDVQWAMLRSIPALRNVELMRIGYAIEYDAVATGEITADMQTRRLRGLFFAGQINGTTGYEEAAAQGLMAGINAAHYVQGKPPVILGRAEAYIGVLIDDLTTKEIREPYRMFTSRAEYRLLLRGDNADLRLTPLAYRLGLVDGERAAVVEARRQQTEHALQQMRERRIFPSAAVNASLEAHGIKPISQPVTVAEVLARPEVRYTQLRDALPDLPALSDAVIEQVEIGCKYSGYIARQEREVARMQKMEHRRIPPDFDYTSLPGLRNEARQVLMRFRPATLGQAGRLAGINPADVAIILFALERRQGDQVAR.

11 to 16 (GAGHAG) provides a ligand contact to FAD. 296–310 (GPRYCPSIEDKIVRF) lines the NAD(+) pocket.

This sequence belongs to the MnmG family. In terms of assembly, homodimer. Heterotetramer of two MnmE and two MnmG subunits. It depends on FAD as a cofactor.

Its subcellular location is the cytoplasm. NAD-binding protein involved in the addition of a carboxymethylaminomethyl (cmnm) group at the wobble position (U34) of certain tRNAs, forming tRNA-cmnm(5)s(2)U34. The protein is tRNA uridine 5-carboxymethylaminomethyl modification enzyme MnmG of Chloroflexus aurantiacus (strain ATCC 29366 / DSM 635 / J-10-fl).